A 552-amino-acid chain; its full sequence is Probable bifunctional methylthioribose-1-phosphate isomerase/methylthioribulose-1-phosphate dehydratase (552 aa).

The tract at residues Met1–Gly333 is methylthioribose-1-phosphate isomerase activity. Residues Arg49 to Ala51, Arg91, and Gln195 each bind substrate. Asp236 (proton donor) is an active-site residue. Asn246–Lys247 is a binding site for substrate. The methylthioribulose-1-phosphate dehydratase activity stretch occupies residues Thr334–Gly535. The Zn(2+) site is built by His427 and His429.

This sequence in the N-terminal section; belongs to the eIF-2B alpha/beta/delta subunits family. MtnA subfamily. It in the C-terminal section; belongs to the aldolase class II family. MtnB subfamily. Requires Zn(2+) as cofactor.

It carries out the reaction 5-(methylsulfanyl)-alpha-D-ribose 1-phosphate = 5-(methylsulfanyl)-D-ribulose 1-phosphate. The catalysed reaction is 5-(methylsulfanyl)-D-ribulose 1-phosphate = 5-methylsulfanyl-2,3-dioxopentyl phosphate + H2O. It functions in the pathway amino-acid biosynthesis; L-methionine biosynthesis via salvage pathway; L-methionine from S-methyl-5-thio-alpha-D-ribose 1-phosphate: step 1/6. Its pathway is amino-acid biosynthesis; L-methionine biosynthesis via salvage pathway; L-methionine from S-methyl-5-thio-alpha-D-ribose 1-phosphate: step 2/6. Its function is as follows. Bifunctional protein that catalyzes the interconversion of methylthioribose-1-phosphate (MTR-1-P) into methylthioribulose-1-phosphate (MTRu-1-P), and the dehydration of methylthioribulose-1-phosphate (MTRu-1-P) into 2,3-diketo-5-methylthiopentyl-1-phosphate (DK-MTP-1-P). The chain is Probable bifunctional methylthioribose-1-phosphate isomerase/methylthioribulose-1-phosphate dehydratase (mtnAB) from Nocardia farcinica (strain IFM 10152).